We begin with the raw amino-acid sequence, 262 residues long: Cytochrome c oxidase subunit 3 (262 aa).

7 helical membrane-spanning segments follow: residues Pro16 to Phe36, Ser39 to Trp59, Gly83 to Phe103, Phe128 to Ala148, Ala160 to Met180, Phe198 to Val218, and Trp241 to Gly261.

Belongs to the cytochrome c oxidase subunit 3 family. As to quaternary structure, component of the cytochrome c oxidase (complex IV, CIV), a multisubunit enzyme composed of a catalytic core of 3 subunits and several supernumerary subunits. The complex exists as a monomer or a dimer and forms supercomplexes (SCs) in the inner mitochondrial membrane with ubiquinol-cytochrome c oxidoreductase (cytochrome b-c1 complex, complex III, CIII).

It is found in the mitochondrion inner membrane. It carries out the reaction 4 Fe(II)-[cytochrome c] + O2 + 8 H(+)(in) = 4 Fe(III)-[cytochrome c] + 2 H2O + 4 H(+)(out). Functionally, component of the cytochrome c oxidase, the last enzyme in the mitochondrial electron transport chain which drives oxidative phosphorylation. The respiratory chain contains 3 multisubunit complexes succinate dehydrogenase (complex II, CII), ubiquinol-cytochrome c oxidoreductase (cytochrome b-c1 complex, complex III, CIII) and cytochrome c oxidase (complex IV, CIV), that cooperate to transfer electrons derived from NADH and succinate to molecular oxygen, creating an electrochemical gradient over the inner membrane that drives transmembrane transport and the ATP synthase. Cytochrome c oxidase is the component of the respiratory chain that catalyzes the reduction of oxygen to water. Electrons originating from reduced cytochrome c in the intermembrane space (IMS) are transferred via the dinuclear copper A center (CU(A)) of subunit 2 and heme A of subunit 1 to the active site in subunit 1, a binuclear center (BNC) formed by heme A3 and copper B (CU(B)). The BNC reduces molecular oxygen to 2 water molecules using 4 electrons from cytochrome c in the IMS and 4 protons from the mitochondrial matrix. The chain is Cytochrome c oxidase subunit 3 (COIII) from Metridium senile (Brown sea anemone).